A 196-amino-acid polypeptide reads, in one-letter code: GTP cyclohydrolase 1 (196 aa).

Zn(2+)-binding residues include Cys86, His89, and Cys157.

The protein belongs to the GTP cyclohydrolase I family. As to quaternary structure, toroid-shaped homodecamer, composed of two pentamers of five dimers.

It catalyses the reaction GTP + H2O = 7,8-dihydroneopterin 3'-triphosphate + formate + H(+). The protein operates within cofactor biosynthesis; 7,8-dihydroneopterin triphosphate biosynthesis; 7,8-dihydroneopterin triphosphate from GTP: step 1/1. The polypeptide is GTP cyclohydrolase 1 (Parabacteroides distasonis (strain ATCC 8503 / DSM 20701 / CIP 104284 / JCM 5825 / NCTC 11152)).